Here is a 257-residue protein sequence, read N- to C-terminus: Major prion protein (257 aa).

The first 24 residues, methionine 1–cysteine 24, serve as a signal peptide directing secretion. Positions lysine 25–tyrosine 41 are interaction with ADGRG6. The tract at residues lysine 25–alanine 234 is interaction with GRB2, ERI3 and SYN1. The segment at arginine 27–lysine 114 is disordered. Tandem repeats lie at residues proline 54 to glutamine 62, proline 63 to glutamine 70, proline 71 to glutamine 78, proline 79 to glutamine 86, and proline 87 to glutamine 95. A 5 X 8 AA tandem repeats of P-H-G-G-G-W-G-Q region spans residues proline 54 to glutamine 95. The span at glutamine 55–glycine 101 shows a compositional bias: gly residues. Residues histidine 64, glycine 65, glycine 66, histidine 72, glycine 73, glycine 74, histidine 80, glycine 81, glycine 82, histidine 88, glycine 90, and glycine 91 each contribute to the Cu(2+) site. Residues cysteine 183 and cysteine 218 are joined by a disulfide bond. N-linked (GlcNAc...) asparagine glycans are attached at residues asparagine 185 and asparagine 201. The GPI-anchor amidated alanine moiety is linked to residue alanine 234. Positions serine 235–glycine 257 are cleaved as a propeptide — removed in mature form.

The protein belongs to the prion family. As to quaternary structure, monomer and homodimer. Has a tendency to aggregate into amyloid fibrils containing a cross-beta spine, formed by a steric zipper of superposed beta-strands. Soluble oligomers may represent an intermediate stage on the path to fibril formation. Copper binding may promote oligomerization. Interacts with GRB2, APP, ERI3/PRNPIP and SYN1. Mislocalized cytosolically exposed PrP interacts with MGRN1; this interaction alters MGRN1 subcellular location and causes lysosomal enlargement. Interacts with APP. Interacts with KIAA1191. Interacts with ADGRG6.

The protein resides in the cell membrane. It localises to the golgi apparatus. Its function is as follows. Its primary physiological function is unclear. May play a role in neuronal development and synaptic plasticity. May be required for neuronal myelin sheath maintenance. May promote myelin homeostasis through acting as an agonist for ADGRG6 receptor. May play a role in iron uptake and iron homeostasis. Soluble oligomers are toxic to cultured neuroblastoma cells and induce apoptosis (in vitro). Association with GPC1 (via its heparan sulfate chains) targets PRNP to lipid rafts. Also provides Cu(2+) or Zn(2+) for the ascorbate-mediated GPC1 deaminase degradation of its heparan sulfate side chains. The sequence is that of Major prion protein (PRNP) from Neovison vison (American mink).